The chain runs to 68 residues: Protein SlyX homolog (68 aa).

This sequence belongs to the SlyX family.

This Pseudomonas entomophila (strain L48) protein is Protein SlyX homolog.